A 242-amino-acid chain; its full sequence is Capsid protein (242 aa).

The Bipartite nuclear localization signal motif lies at 1-42 (MPYKRKLTSYFPQSKRFRGAKSGMAVVKTSASRRLYKKGKRK).

Belongs to the geminiviridae capsid protein family. In terms of assembly, homomultimer. Binds to single-stranded and double-stranded viral DNA. Interacts (via nuclear localization signal) with host importin alpha-1a.

It is found in the virion. Its subcellular location is the host nucleus. Encapsidates the viral genome into characteristic twinned ('geminate') particles. Binds the genomic viral ssDNA and shuttles it into and out of the cell nucleus. Plays a role in protection of the genome from degradation, virus acquisition and transmission by insect vectors, infectivity, and systemic movement. The CP of monopartite geminiviruses is absolutely essential for virus movement. In Solanum lycopersicum (Tomato), this protein is Capsid protein.